The following is a 561-amino-acid chain: Potassium-transporting ATPase potassium-binding subunit (561 aa).

10 consecutive transmembrane segments (helical) span residues 4–24 (IVMQ…PLGI), 65–85 (AVSV…VLML), 133–153 (IGLT…LFAV), 177–197 (LYIL…QGVV), 253–273 (FTNL…VVMF), 285–305 (AIMT…TISE), 380–400 (GLYG…LLVG), 417–437 (MVCL…AVAV), 484–504 (MVGA…ALYL), and 528–548 (FIGL…LPAL).

It belongs to the KdpA family. As to quaternary structure, the system is composed of three essential subunits: KdpA, KdpB and KdpC.

It is found in the cell membrane. In terms of biological role, part of the high-affinity ATP-driven potassium transport (or Kdp) system, which catalyzes the hydrolysis of ATP coupled with the electrogenic transport of potassium into the cytoplasm. This subunit binds the extracellular potassium ions and delivers the ions to the membrane domain of KdpB through an intramembrane tunnel. This chain is Potassium-transporting ATPase potassium-binding subunit, found in Listeria monocytogenes serotype 4b (strain F2365).